A 438-amino-acid polypeptide reads, in one-letter code: EF-hand calcium-binding domain-containing protein 3 (438 aa).

EF-hand domains follow at residues 47–82 and 83–118; these read SQMRAFQDAYNFFNKDKTGCIDLHGMMCTLAKLGMN and LTKHDVHNELRCADIDQDGKVNFSDFLKVLTDKNRF. Residues Asp96, Asp98, Asp100, Lys102, and Asp107 each contribute to the Ca(2+) site. Phosphotyrosine is present on Tyr279. The disordered stretch occupies residues 413–438; the sequence is SSSDISECDTDTGRKRKRKGFKGFRQ. The segment covering 426–438 has biased composition (basic residues); the sequence is RKRKRKGFKGFRQ.

The chain is EF-hand calcium-binding domain-containing protein 3 (EFCAB3) from Bos taurus (Bovine).